The following is a 168-amino-acid chain: Co-chaperone protein HscB homolog (168 aa).

The region spanning 5–77 (DYFSLFGLPS…MLRARYLCES (73 aa)) is the J domain.

This sequence belongs to the HscB family. As to quaternary structure, interacts with HscA and stimulates its ATPase activity.

Its function is as follows. Co-chaperone involved in the maturation of iron-sulfur cluster-containing proteins. Seems to help targeting proteins to be folded toward HscA. The protein is Co-chaperone protein HscB homolog of Bordetella avium (strain 197N).